The chain runs to 543 residues: Heparanase-like protein 1 (543 aa).

Positions 1–24 are cleaved as a signal peptide; that stretch reads MGFRVCVIVVFLGCLLLVPEKTMA. Residue Asn-184 is glycosylated (N-linked (GlcNAc...) asparagine). The active-site Proton donor is Glu-201. Residue Asn-304 is glycosylated (N-linked (GlcNAc...) asparagine). The active-site Nucleophile is Glu-320. Residues Asn-425 and Asn-428 are each glycosylated (N-linked (GlcNAc...) asparagine).

Belongs to the glycosyl hydrolase 79 family.

Its subcellular location is the lysosome membrane. It localises to the secreted. Its function is as follows. Endoglycosidase which is a cell surface and extracellular matrix-degrading enzyme. Cleaves heparan sulfate proteoglycans (HSPGs) into heparan sulfate side chains and core proteoglycans. This Arabidopsis thaliana (Mouse-ear cress) protein is Heparanase-like protein 1.